Consider the following 215-residue polypeptide: Ribulose-phosphate 3-epimerase (215 aa).

S13 contacts substrate. Residues H38, D40, H69, and D175 each contribute to the a divalent metal cation site. The active-site Proton acceptor is D40. Substrate is bound by residues H69, 175 to 177, and 196 to 197; these read DGG and GS. The Proton donor role is filled by D175.

This sequence belongs to the ribulose-phosphate 3-epimerase family. A divalent metal cation serves as cofactor.

It carries out the reaction D-ribulose 5-phosphate = D-xylulose 5-phosphate. Its pathway is carbohydrate degradation. Its function is as follows. Catalyzes the reversible epimerization of D-ribulose 5-phosphate to D-xylulose 5-phosphate. This Mycoplasma pneumoniae (strain ATCC 29342 / M129 / Subtype 1) (Mycoplasmoides pneumoniae) protein is Ribulose-phosphate 3-epimerase.